The chain runs to 170 residues: Acetyl-CoA decarbonylase/synthase complex subunit epsilon 1 (170 aa).

The protein belongs to the CdhB family. Heterotetramer of two alpha and two epsilon subunits. The ACDS complex is made up of alpha, epsilon, beta, gamma and delta subunits with a probable stoichiometry of (alpha(2)epsilon(2))(4)-beta(8)-(gamma(1)delta(1))(8).

It participates in one-carbon metabolism; methanogenesis from acetate. Its function is as follows. Part of a complex that catalyzes the reversible cleavage of acetyl-CoA, allowing growth on acetate as sole source of carbon and energy. The alpha-epsilon subcomponent functions as a carbon monoxide dehydrogenase. The precise role of the epsilon subunit is unclear; it may have a stabilizing role within the alpha(2)epsilon(2) component and/or be involved in electron transfer to FAD during a potential FAD-mediated CO oxidation. The sequence is that of Acetyl-CoA decarbonylase/synthase complex subunit epsilon 1 from Methanosarcina barkeri (strain Fusaro / DSM 804).